The chain runs to 65 residues: Large ribosomal subunit protein bL33c (65 aa).

It belongs to the bacterial ribosomal protein bL33 family.

The protein resides in the plastid. It is found in the chloroplast. This Chaetosphaeridium globosum (Charophycean green alga) protein is Large ribosomal subunit protein bL33c.